The sequence spans 63 residues: Cytochrome b-c1 complex subunit 9 (63 aa).

Residues 2-21 (AAATLTSKLYSLLFRRTSTF) lie on the Mitochondrial matrix side of the membrane. Residues 22–47 (ALTIIVGVMFFERAFDQGADAIYDHI) form a helical membrane-spanning segment. Residues 48–63 (NEGKLWKHIKHKYENK) lie on the Mitochondrial intermembrane side of the membrane.

It belongs to the UQCR10/QCR9 family. Component of the ubiquinol-cytochrome c oxidoreductase (cytochrome b-c1 complex, complex III, CIII), a multisubunit enzyme composed of 11 subunits. The complex is composed of 3 respiratory subunits cytochrome b, cytochrome c1 and Rieske protein UQCRFS1, 2 core protein subunits UQCRC1/QCR1 and UQCRC2/QCR2, and 6 low-molecular weight protein subunits UQCRH/QCR6, UQCRB/QCR7, UQCRQ/QCR8, UQCR10/QCR9, UQCR11/QCR10 and subunit 9, the cleavage product of Rieske protein UQCRFS1. The complex exists as an obligatory dimer and forms supercomplexes (SCs) in the inner mitochondrial membrane with NADH-ubiquinone oxidoreductase (complex I, CI) and cytochrome c oxidase (complex IV, CIV), resulting in different assemblies (supercomplex SCI(1)III(2)IV(1) and megacomplex MCI(2)III(2)IV(2)). Interacts with STMP1.

It is found in the mitochondrion inner membrane. In terms of biological role, component of the ubiquinol-cytochrome c oxidoreductase, a multisubunit transmembrane complex that is part of the mitochondrial electron transport chain which drives oxidative phosphorylation. The respiratory chain contains 3 multisubunit complexes succinate dehydrogenase (complex II, CII), ubiquinol-cytochrome c oxidoreductase (cytochrome b-c1 complex, complex III, CIII) and cytochrome c oxidase (complex IV, CIV), that cooperate to transfer electrons derived from NADH and succinate to molecular oxygen, creating an electrochemical gradient over the inner membrane that drives transmembrane transport and the ATP synthase. The cytochrome b-c1 complex catalyzes electron transfer from ubiquinol to cytochrome c, linking this redox reaction to translocation of protons across the mitochondrial inner membrane, with protons being carried across the membrane as hydrogens on the quinol. In the process called Q cycle, 2 protons are consumed from the matrix, 4 protons are released into the intermembrane space and 2 electrons are passed to cytochrome c. This Homo sapiens (Human) protein is Cytochrome b-c1 complex subunit 9 (UQCR10).